We begin with the raw amino-acid sequence, 349 residues long: Isopentenyl-diphosphate delta-isomerase (349 aa).

Position 6-7 (6-7) interacts with substrate; it reads RK. FMN is bound by residues 62 to 64, Ser93, and Asn122; that span reads AMT. Residue Gln152 coordinates substrate. Residue Glu153 participates in Mg(2+) binding. Residues Lys184, Thr214, 258–259, and 280–281 each bind FMN; these read GG and AG.

It belongs to the IPP isomerase type 2 family. As to quaternary structure, homooctamer. Dimer of tetramers. Requires FMN as cofactor. NADPH is required as a cofactor. It depends on Mg(2+) as a cofactor.

The protein localises to the cytoplasm. It catalyses the reaction isopentenyl diphosphate = dimethylallyl diphosphate. Its function is as follows. Involved in the biosynthesis of isoprenoids. Catalyzes the 1,3-allylic rearrangement of the homoallylic substrate isopentenyl (IPP) to its allylic isomer, dimethylallyl diphosphate (DMAPP). This Bacillus licheniformis (strain ATCC 14580 / DSM 13 / JCM 2505 / CCUG 7422 / NBRC 12200 / NCIMB 9375 / NCTC 10341 / NRRL NRS-1264 / Gibson 46) protein is Isopentenyl-diphosphate delta-isomerase.